Here is a 340-residue protein sequence, read N- to C-terminus: Eukaryotic translation initiation factor 3 subunit I (340 aa).

WD repeat units lie at residues 8-47 (GHER…RLGT), 50-91 (GHQG…KVWD), 150-189 (CTES…QLEN), 194-233 (EFDH…ILKT), and 291-330 (GHFG…FDFM).

This sequence belongs to the eIF-3 subunit I family. Component of the eukaryotic translation initiation factor 3 (eIF-3) complex.

It localises to the cytoplasm. In terms of biological role, component of the eukaryotic translation initiation factor 3 (eIF-3) complex, which is involved in protein synthesis of a specialized repertoire of mRNAs and, together with other initiation factors, stimulates binding of mRNA and methionyl-tRNAi to the 40S ribosome. The eIF-3 complex specifically targets and initiates translation of a subset of mRNAs involved in cell proliferation. This Aspergillus fumigatus (strain CBS 144.89 / FGSC A1163 / CEA10) (Neosartorya fumigata) protein is Eukaryotic translation initiation factor 3 subunit I (tif34).